A 238-amino-acid chain; its full sequence is tRNA (guanine-N(7)-)-methyltransferase (238 aa).

Residues Glu-70, Asp-95, Asp-122, and Asp-145 each coordinate S-adenosyl-L-methionine. Asp-145 is an active-site residue. Substrate-binding positions include Lys-149, Asp-181, and 216-219; that span reads TKFE.

This sequence belongs to the class I-like SAM-binding methyltransferase superfamily. TrmB family.

It carries out the reaction guanosine(46) in tRNA + S-adenosyl-L-methionine = N(7)-methylguanosine(46) in tRNA + S-adenosyl-L-homocysteine. It participates in tRNA modification; N(7)-methylguanine-tRNA biosynthesis. Functionally, catalyzes the formation of N(7)-methylguanine at position 46 (m7G46) in tRNA. In Neisseria meningitidis serogroup A / serotype 4A (strain DSM 15465 / Z2491), this protein is tRNA (guanine-N(7)-)-methyltransferase.